We begin with the raw amino-acid sequence, 329 residues long: Neuropeptides B/W receptor type 1 (329 aa).

Over 1-43 (MHNLTLFESGGDNVSCGGSSLGCPNGSSLAPLPLPQPLAVAVP) the chain is Extracellular. N3, N13, and N25 each carry an N-linked (GlcNAc...) asparagine glycan. The helical transmembrane segment at 44 to 64 (VVYGVICAVGLAGNSAVLYVL) threads the bilayer. The Cytoplasmic segment spans residues 65–75 (LRTPRMKTVTN). A helical transmembrane segment spans residues 76–96 (VFILNLAIADELFTLVLPINI). Residues 97-112 (ADFLLRRWPFGEVMCK) lie on the Extracellular side of the membrane. C111 and C190 are disulfide-bonded. A helical membrane pass occupies residues 113–133 (LIVAVDQYNTFSSLYFLAVMS). The Cytoplasmic portion of the chain corresponds to 134-158 (ADRYLVVLATAESRRVSGRTYGAAR). Residues 159–179 (AVSLAVWALVTLVVLPFAVFA) form a helical membrane-spanning segment. The Extracellular portion of the chain corresponds to 180 to 209 (RLDEEQGRRQCVLVFPQPEAFWWRASRLYT). The chain crosses the membrane as a helical span at residues 210–230 (LVLGFAIPVTTICALYTTLLC). The Cytoplasmic portion of the chain corresponds to 231-250 (RLRAIQLDSHAKALDRAKKR). A helical transmembrane segment spans residues 251 to 271 (VTLLVAAILAVCLLCWTPYHL). Residues 272–289 (STIVALTTDLPQTPLVIG) are Extracellular-facing. A helical transmembrane segment spans residues 290–312 (ISYFITSLSYANSCLNPFLYAFL). Over 313–329 (DDSFRRSLRQLVSCRSA) the chain is Cytoplasmic.

The protein belongs to the G-protein coupled receptor 1 family.

The protein resides in the cell membrane. In terms of biological role, interacts specifically with a number of opioid ligands. Receptor for neuropeptides B and W, which may be involved in neuroendocrine system regulation, food intake and the organization of other signals. This is Neuropeptides B/W receptor type 1 (Npbwr1) from Mus musculus (Mouse).